Consider the following 384-residue polypeptide: Ceramide very long chain fatty acid hydroxylase SCS7 (384 aa).

Topologically, residues 1–197 (MSTNTSKTLE…NFLEPLTKTA (197 aa)) are cytoplasmic. The 82-residue stretch at 9-90 (LELFSKKTVQ…EDEYLIGYLA (82 aa)) folds into the Cytochrome b5 heme-binding domain. Residues His-45 and His-72 each contribute to the heme site. Residues 198–216 (WWVVPVAWLPVVVYHMGVA) traverse the membrane as a helical segment. The Lumenal portion of the chain corresponds to 217-221 (LKNMN). A helical transmembrane segment spans residues 222–246 (QLFACFLFCVGVFVWTLIEYGLHRF). Zn(2+) is bound by residues His-244, His-249, His-268, His-271, and His-272. At 247-284 (LFHFDDWLPESNIAFATHFLLHGCHHYLPMDKYRLVMP) the chain is on the cytoplasmic side. The chain crosses the membrane as a helical span at residues 285–302 (PTLFVILCAPFYKLVFAL). The Lumenal segment spans residues 303–304 (LP). A helical transmembrane segment spans residues 305–328 (LYWAYAGFAGGLFGYVCYDECHFF). Residues His-326, His-330, His-345, His-348, and His-349 each contribute to the Zn(2+) site. Over 329 to 384 (LHHSKLPPFMRKLKKYHLEHHYKNYQLGFGVTSWFWDEVFGTYLGPDAPLSKMKYE) the chain is Cytoplasmic.

It belongs to the sterol desaturase family. SCS7 subfamily. Requires Zn(2+) as cofactor.

It is found in the endoplasmic reticulum membrane. The enzyme catalyses an N-(1,2 saturated acyl)-(4R)-hydroxysphinganine + 2 Fe(II)-[cytochrome b5] + O2 + 2 H(+) = an N-(2R-hydroxyacyl)-4R-hydroxysphinganine + 2 Fe(III)-[cytochrome b5] + H2O. The catalysed reaction is an N-(1,2-saturated acyl)sphinganine + 2 Fe(II)-[cytochrome b5] + O2 + 2 H(+) = an N-[(2'R)-hydroxyacyl]sphinganine + 2 Fe(III)-[cytochrome b5] + H2O. It catalyses the reaction N-hexacosanoyl-(4R)-hydroxysphinganine + 2 Fe(II)-[cytochrome b5] + O2 + 2 H(+) = N-(2-hydroxyhexacosanyl)-(4R)-hydroxysphinganine + 2 Fe(III)-[cytochrome b5] + H2O. Its pathway is sphingolipid metabolism. Its function is as follows. Ceramide hydroxylase involved in the hydroxylation of sphingolipid-associated very long chain fatty acids. Postulated to hydroxylate the very long chain fatty acid of dihydroceramides and phytoceramides at C-2. The protein is Ceramide very long chain fatty acid hydroxylase SCS7 of Saccharomyces cerevisiae (strain ATCC 204508 / S288c) (Baker's yeast).